Here is a 270-residue protein sequence, read N- to C-terminus: Thiazole synthase (270 aa).

Catalysis depends on K111, which acts as the Schiff-base intermediate with DXP. Residues G172, 198-199, and 220-221 contribute to the 1-deoxy-D-xylulose 5-phosphate site; these read AG and NS. The tract at residues 249–270 is disordered; it reads AGRLPTRAQASPSSPTTGKVND. The span at 256 to 270 shows a compositional bias: polar residues; that stretch reads AQASPSSPTTGKVND.

It belongs to the ThiG family. In terms of assembly, homotetramer. Forms heterodimers with either ThiH or ThiS.

The protein localises to the cytoplasm. It catalyses the reaction [ThiS sulfur-carrier protein]-C-terminal-Gly-aminoethanethioate + 2-iminoacetate + 1-deoxy-D-xylulose 5-phosphate = [ThiS sulfur-carrier protein]-C-terminal Gly-Gly + 2-[(2R,5Z)-2-carboxy-4-methylthiazol-5(2H)-ylidene]ethyl phosphate + 2 H2O + H(+). It participates in cofactor biosynthesis; thiamine diphosphate biosynthesis. Its function is as follows. Catalyzes the rearrangement of 1-deoxy-D-xylulose 5-phosphate (DXP) to produce the thiazole phosphate moiety of thiamine. Sulfur is provided by the thiocarboxylate moiety of the carrier protein ThiS. In vitro, sulfur can be provided by H(2)S. The chain is Thiazole synthase from Synechococcus sp. (strain WH7803).